Consider the following 344-residue polypeptide: Phosphoribosylformylglycinamidine cyclo-ligase (344 aa).

It belongs to the AIR synthase family.

It localises to the cytoplasm. It catalyses the reaction 2-formamido-N(1)-(5-O-phospho-beta-D-ribosyl)acetamidine + ATP = 5-amino-1-(5-phospho-beta-D-ribosyl)imidazole + ADP + phosphate + H(+). It participates in purine metabolism; IMP biosynthesis via de novo pathway; 5-amino-1-(5-phospho-D-ribosyl)imidazole from N(2)-formyl-N(1)-(5-phospho-D-ribosyl)glycinamide: step 2/2. The polypeptide is Phosphoribosylformylglycinamidine cyclo-ligase (Haemophilus influenzae (strain 86-028NP)).